Reading from the N-terminus, the 242-residue chain is Phosphoribosylaminoimidazole-succinocarboxamide synthase (242 aa).

It belongs to the SAICAR synthetase family.

The catalysed reaction is 5-amino-1-(5-phospho-D-ribosyl)imidazole-4-carboxylate + L-aspartate + ATP = (2S)-2-[5-amino-1-(5-phospho-beta-D-ribosyl)imidazole-4-carboxamido]succinate + ADP + phosphate + 2 H(+). It functions in the pathway purine metabolism; IMP biosynthesis via de novo pathway; 5-amino-1-(5-phospho-D-ribosyl)imidazole-4-carboxamide from 5-amino-1-(5-phospho-D-ribosyl)imidazole-4-carboxylate: step 1/2. This is Phosphoribosylaminoimidazole-succinocarboxamide synthase from Prochlorococcus marinus (strain MIT 9303).